A 283-amino-acid polypeptide reads, in one-letter code: Phosphatidylglycerol--prolipoprotein diacylglyceryl transferase (283 aa).

Transmembrane regions (helical) follow at residues 20–40, 60–80, 94–114, and 121–141; these read IGGF…IIGL, LVIW…VAFE, IWQG…AILV, and LSFW…QAIG. R142 serves as a coordination point for a 1,2-diacyl-sn-glycero-3-phospho-(1'-sn-glycerol). 3 helical membrane passes run 183–203, 214–234, and 248–268; these read FLYE…LFFY, GTIT…IEGL, and QVVS…LYLL.

It belongs to the Lgt family.

The protein resides in the cell inner membrane. The enzyme catalyses L-cysteinyl-[prolipoprotein] + a 1,2-diacyl-sn-glycero-3-phospho-(1'-sn-glycerol) = an S-1,2-diacyl-sn-glyceryl-L-cysteinyl-[prolipoprotein] + sn-glycerol 1-phosphate + H(+). Its pathway is protein modification; lipoprotein biosynthesis (diacylglyceryl transfer). Its function is as follows. Catalyzes the transfer of the diacylglyceryl group from phosphatidylglycerol to the sulfhydryl group of the N-terminal cysteine of a prolipoprotein, the first step in the formation of mature lipoproteins. This chain is Phosphatidylglycerol--prolipoprotein diacylglyceryl transferase, found in Synechocystis sp. (strain ATCC 27184 / PCC 6803 / Kazusa).